We begin with the raw amino-acid sequence, 242 residues long: Small ribosomal subunit protein uS2 (242 aa).

It belongs to the universal ribosomal protein uS2 family.

The sequence is that of Small ribosomal subunit protein uS2 from Shewanella woodyi (strain ATCC 51908 / MS32).